The following is a 284-amino-acid chain: Bifunctional protein FolD (284 aa).

Residues 166-168 (GRS) and serine 191 each bind NADP(+).

The protein belongs to the tetrahydrofolate dehydrogenase/cyclohydrolase family. Homodimer.

The catalysed reaction is (6R)-5,10-methylene-5,6,7,8-tetrahydrofolate + NADP(+) = (6R)-5,10-methenyltetrahydrofolate + NADPH. The enzyme catalyses (6R)-5,10-methenyltetrahydrofolate + H2O = (6R)-10-formyltetrahydrofolate + H(+). It participates in one-carbon metabolism; tetrahydrofolate interconversion. In terms of biological role, catalyzes the oxidation of 5,10-methylenetetrahydrofolate to 5,10-methenyltetrahydrofolate and then the hydrolysis of 5,10-methenyltetrahydrofolate to 10-formyltetrahydrofolate. This Leptospira interrogans serogroup Icterohaemorrhagiae serovar copenhageni (strain Fiocruz L1-130) protein is Bifunctional protein FolD.